The chain runs to 167 residues: NAD(P)H-quinone oxidoreductase subunit I, chloroplastic (167 aa).

2 consecutive 4Fe-4S ferredoxin-type domains span residues 55–84 (GRIH…VDWK) and 95–124 (LNYS…MTEE). The [4Fe-4S] cluster site is built by Cys64, Cys67, Cys70, Cys74, Cys104, Cys107, Cys110, and Cys114.

The protein belongs to the complex I 23 kDa subunit family. In terms of assembly, NDH is composed of at least 16 different subunits, 5 of which are encoded in the nucleus. [4Fe-4S] cluster serves as cofactor.

The protein resides in the plastid. The protein localises to the chloroplast thylakoid membrane. It carries out the reaction a plastoquinone + NADH + (n+1) H(+)(in) = a plastoquinol + NAD(+) + n H(+)(out). It catalyses the reaction a plastoquinone + NADPH + (n+1) H(+)(in) = a plastoquinol + NADP(+) + n H(+)(out). NDH shuttles electrons from NAD(P)H:plastoquinone, via FMN and iron-sulfur (Fe-S) centers, to quinones in the photosynthetic chain and possibly in a chloroplast respiratory chain. The immediate electron acceptor for the enzyme in this species is believed to be plastoquinone. Couples the redox reaction to proton translocation, and thus conserves the redox energy in a proton gradient. The polypeptide is NAD(P)H-quinone oxidoreductase subunit I, chloroplastic (Lepidium virginicum (Virginia pepperweed)).